The sequence spans 473 residues: Putative F-box/LRR-repeat protein At3g59170 (473 aa).

An F-box domain is found at K6–S54. 5 LRR repeats span residues T168–S194, M196–G221, S229–H254, V333–S364, and D365–G390.

This Arabidopsis thaliana (Mouse-ear cress) protein is Putative F-box/LRR-repeat protein At3g59170.